A 709-amino-acid polypeptide reads, in one-letter code: MLNFFAAAPKGFEYSLAQELTEFGATEVKESVAGVYFTASLALAYRITLWTRLASRIVLVIYKGSCESAEQLYNAAYCVDWPAHFSNKSTFSIDFHGTGGFLNNTQFGALKIKDAIVDRFRDDDIERPNVSRVDAEFKVDAHFRNGVITIAMNFSGPSLHQRGYRSTTGEAPLKENLAANMLVRSGWQASPSTLLDPFCGSGTVLIEAALMAADIAPGLQRSRFGFEHWRRHDKAVWQEIVEEAKARASLGVKRCEIKFYGSDIDSRLVALAKRNAENAGVLELIEFKVADALTIAPPAESGYLITNPPYGERLGNVSELLQLYYQLGDKFKKEFGGWKVAMLCSDIELVSSLKLKADKQMKMFNGALECAFNIYTLHANSTRRDTPVLPDGVDIADIAPAFANRIKKNAKLLEKWAKKEGIDSYRIYDADIPEYNVAVDKYLDYVIIQEYMAPATIPEAVTKRRLSDVLLALPSAIGINPNKMIMKTRERQKGTSQYQKLDERKLELITTEYGAKFKLNLTGYLDTGLFLDHRLTRRLVGQKSKGRRVLNLFSYTGSASVHAALGGAKSVTTVDMSNTYIAWAKDNFALNGLQGKQYEFVQSDCMQWIRDCNEQYDLIFIDPPTFSNSKRMEDSFDVQRDHVNLLASLVKLLSPTGELVFSNNKRKFKMDIETLTKMNINVTNIDDVTLPMDYKRNPHIHNTWLITHA.

In terms of domain architecture, THUMP spans 43–154; the sequence is LAYRITLWTR…NGVITIAMNF (112 aa).

This sequence belongs to the methyltransferase superfamily. RlmKL family.

Its subcellular location is the cytoplasm. It carries out the reaction guanosine(2445) in 23S rRNA + S-adenosyl-L-methionine = N(2)-methylguanosine(2445) in 23S rRNA + S-adenosyl-L-homocysteine + H(+). The enzyme catalyses guanosine(2069) in 23S rRNA + S-adenosyl-L-methionine = N(2)-methylguanosine(2069) in 23S rRNA + S-adenosyl-L-homocysteine + H(+). In terms of biological role, specifically methylates the guanine in position 2445 (m2G2445) and the guanine in position 2069 (m7G2069) of 23S rRNA. In Shewanella baltica (strain OS195), this protein is Ribosomal RNA large subunit methyltransferase K/L.